A 419-amino-acid polypeptide reads, in one-letter code: Methylthioribose kinase (419 aa).

Asparagine 49 and lysine 64 together coordinate ATP. A substrate-binding site is contributed by aspartate 239. Aspartate 256–glutamate 258 lines the ATP pocket. Arginine 365 provides a ligand contact to substrate.

The protein belongs to the methylthioribose kinase family. As to quaternary structure, homodimer.

It carries out the reaction 5-(methylsulfanyl)-D-ribose + ATP = 5-(methylsulfanyl)-alpha-D-ribose 1-phosphate + ADP + H(+). The enzyme catalyses 5-deoxy-D-ribose + ATP = 5-deoxy-alpha-D-ribose 1-phosphate + ADP + H(+). The protein operates within amino-acid biosynthesis; L-methionine biosynthesis via salvage pathway; S-methyl-5-thio-alpha-D-ribose 1-phosphate from S-methyl-5'-thioadenosine (hydrolase route): step 2/2. In terms of biological role, catalyzes the phosphorylation of methylthioribose into methylthioribose-1-phosphate. Also catalyzes the phosphorylation of 5-deoxyribose to 5-deoxyribose-1-phosphate. Part of a bifunctional DHAP-shunt salvage pathway for SAM by-products. In Escherichia coli O45:K1 (strain S88 / ExPEC), this protein is Methylthioribose kinase.